Reading from the N-terminus, the 340-residue chain is Selenide, water dikinase (340 aa).

The active site involves U17. Position 17 (U17) is a non-standard amino acid, selenocysteine. Residues K20 and 45–47 (NNE) each bind ATP. Mg(2+) is bound at residue D48. Residues D65, D88, and 136–138 (GHT) each bind ATP. Residue D88 coordinates Mg(2+). D224 provides a ligand contact to Mg(2+).

The protein belongs to the selenophosphate synthase 1 family. Class I subfamily. Homodimer. It depends on Mg(2+) as a cofactor.

The catalysed reaction is hydrogenselenide + ATP + H2O = selenophosphate + AMP + phosphate + 2 H(+). Its function is as follows. Synthesizes selenophosphate from selenide and ATP. The sequence is that of Selenide, water dikinase from Campylobacter jejuni subsp. jejuni serotype O:2 (strain ATCC 700819 / NCTC 11168).